The primary structure comprises 244 residues: Ribosomal RNA small subunit methyltransferase G (244 aa).

S-adenosyl-L-methionine contacts are provided by residues Gly79, Phe84, 102–104 (DST), 130–131 (AE), and Arg149. Residues 225 to 244 (DRYPRREGVPNQQPLFWSAK) form a disordered region. The span at 234 to 244 (PNQQPLFWSAK) shows a compositional bias: polar residues.

This sequence belongs to the methyltransferase superfamily. RNA methyltransferase RsmG family.

It is found in the cytoplasm. Functionally, specifically methylates the N7 position of a guanine in 16S rRNA. This is Ribosomal RNA small subunit methyltransferase G from Deinococcus deserti (strain DSM 17065 / CIP 109153 / LMG 22923 / VCD115).